We begin with the raw amino-acid sequence, 254 residues long: Low affinity immunoglobulin gamma Fc region receptor III-A (254 aa).

A signal peptide spans 1–20; the sequence is MWQLLLPTALLLLVSAGMRA. 2 Ig-like C2-type domains span residues 24-105 and 107-189; these read PKAV…LEVH and GWLL…VNIT. 2 cysteine pairs are disulfide-bonded: C47/C89 and C128/C172. The N-linked (GlcNAc...) asparagine glycan is linked to N187. The chain crosses the membrane as a helical span at residues 207–229; that stretch reads YQVSFCLVMVLLFAVDTGLYFSV. The tract at residues 234–254 is disordered; the sequence is PSSTSDWKDHKFKWSKDPQDK. Basic and acidic residues predominate over residues 239-254; the sequence is DWKDHKFKWSKDPQDK.

In terms of assembly, forms a heterooligomeric complex with ITAM-containing signaling subunits, either a homodimer of CD247, a homodimer of FCER1G or a heterodimer of CD247 and FCER1G, to form a functional receptor complex. Interacts (via transmembrane domain) with signaling subunits; this interaction is a prerequisite for receptor complex expression on the cell surface and intracellular signal transduction. Binds the Fc region of antigen-complexed IgG with a preference for IgG1 and IgG3 isotypes. Interacts with CD2; this interaction is involved in NK cell activation and cytotoxicity. Interacts with S100A4; this interaction inhibits PKC-dependent phosphorylation of FCGR3A. Glycosylated. Glycosylation plays an inhibitory role in the interaction with IgG1 and IgG2. In terms of processing, undergoes rapid ectodomain shedding upon NK cell stimulation. The soluble form is produced by a proteolytic cleavage mediated by ADAM17. Repeated stimulation causes receptor shedding, a mechanism that allows for increased NK cell motility and detachment from opsonized target cells while avoiding activation-induced NK cell apoptosis. As to expression, lymphocytes and monocytes.

It localises to the cell membrane. It is found in the secreted. In terms of biological role, receptor for the invariable Fc fragment of immunoglobulin gamma (IgG). Optimally activated upon binding of clustered antigen-IgG complexes displayed on cell surfaces, triggers lysis of antibody-coated cells, a process known as antibody-dependent cellular cytotoxicity (ADCC). Does not bind free monomeric IgG, thus avoiding inappropriate effector cell activation in the absence of antigenic trigger. Mediates IgG effector functions on natural killer (NK) cells. Binds antigen-IgG complexes generated upon infection and triggers NK cell-dependent cytokine production and degranulation to limit viral load and propagation. Involved in the generation of memory-like adaptive NK cells capable to produce high amounts of IFNG and to efficiently eliminate virus-infected cells via ADCC. Regulates NK cell survival and proliferation, in particular by preventing NK cell progenitor apoptosis. Fc-binding subunit that associates with CD247 and/or FCER1G adapters to form functional signaling complexes. Following the engagement of antigen-IgG complexes, triggers phosphorylation of immunoreceptor tyrosine-based activation motif (ITAM)-containing adapters with subsequent activation of phosphatidylinositol 3-kinase signaling and sustained elevation of intracellular calcium that ultimately drive NK cell activation. The ITAM-dependent signaling coupled to receptor phosphorylation by PKC mediates robust intracellular calcium flux that leads to production of pro-inflammatory cytokines, whereas in the absence of receptor phosphorylation it mainly activates phosphatidylinositol 3-kinase signaling leading to cell degranulation. Costimulates NK cells and trigger lysis of target cells independently of IgG binding. Mediates the antitumor activities of therapeutic antibodies. Upon ligation on monocytes triggers TNFA-dependent ADCC of IgG-coated tumor cells. Mediates enhanced ADCC in response to afucosylated IgGs. The chain is Low affinity immunoglobulin gamma Fc region receptor III-A (FCGR3A) from Papio anubis (Olive baboon).